We begin with the raw amino-acid sequence, 269 residues long: GTP cyclohydrolase FolE2 (269 aa).

Belongs to the GTP cyclohydrolase IV family.

It catalyses the reaction GTP + H2O = 7,8-dihydroneopterin 3'-triphosphate + formate + H(+). The protein operates within cofactor biosynthesis; 7,8-dihydroneopterin triphosphate biosynthesis; 7,8-dihydroneopterin triphosphate from GTP: step 1/1. Converts GTP to 7,8-dihydroneopterin triphosphate. The polypeptide is GTP cyclohydrolase FolE2 (Burkholderia ambifaria (strain ATCC BAA-244 / DSM 16087 / CCUG 44356 / LMG 19182 / AMMD) (Burkholderia cepacia (strain AMMD))).